We begin with the raw amino-acid sequence, 804 residues long: MRALWVLGLCCVLLTFGSVRADDEVDVDGTVEEDLGKSREGSRTDDEVVQREEEAIQLDGLNASQIRELREKSEKFAFQAEVNRMMKLIINSLYKNKEIFLRELISNASDALDKIRLISLTDENALAGNEELTVKIKCDKEKNLLHVTDTGVGMTREELVKNLGTIAKSGTSEFLNKMTEAQEDGQSTSELIGQFGVGFYSAFLVADKVIVTSKHNNDTQHIWESDSNEFSVIADPRGNTLGRGTTITLVLKEEASDYLELDTIKNLVKKYSQFINFPIYVWSSKTETVEEPMEEEEAAKEEKEDSDDEAAVEEEEEEKKPKTKKVEKTVWDWELMNDIKPIWQRPSKEVEDDEYKAFYKSFSKESDDPMAYIHFTAEGEVTFKSILFVPTSAPRGLFDEYGSKKSDYIKLYVRRVFITDDFHDMMPKYLNFVKGVVDSDDLPLNVSRETLQQHKLLKVIRKKLVRKTLDMIKKIADEKYNDTFWKEFGTNIKLGVIEDHSNRTRLAKLLRFQSSHHPSDITSLDQYVERMKEKQDKIYFMAGSSRKEAESSPFVERLLKKGYEVIYLTEPVDEYCIQALPEFDGKRFQNVAKEGVKFDESEKTKESREAIEKEFEPLLNWMKDKALKDKIEKAVVSQRLTESPCALVASQYGWSGNMERIMKAQAYQTGKDISTNYYASQKKTFEINPRHPLIKDMLRRVKEDEDDKTVSDLAVVLFETATLRSGYLLPDTKAYGDRIERMLRLSLNIDPDAKVEEEPEEEPEETTEDTTEDTEQDDEEEMDAGTDDEEQETVKKSTAEKDEL.

Positions 1-21 (MRALWVLGLCCVLLTFGSVRA) are cleaved as a signal peptide. An SRT pseudosubstrate motif motif is present at residues 42–44 (SRT). N-linked (GlcNAc...) asparagine glycosylation occurs at Asn-62. A Phosphoserine modification is found at Ser-64. Asn-107 carries N-linked (GlcNAc...) asparagine glycosylation. ATP contacts are provided by Asn-107, Asp-149, and Asn-162. An N6-(2-hydroxyisobutyryl)lysine modification is found at Lys-168. Phosphoserine is present on Ser-172. Phe-199 is an ATP binding site. The N-linked (GlcNAc...) asparagine glycan is linked to Asn-217. At Thr-288 the chain carries Phosphothreonine; by CK2. Positions 288 to 323 (TVEEPMEEEEAAKEEKEDSDDEAAVEEEEEEKKPKT) are disordered. Over residues 289–317 (VEEPMEEEEAAKEEKEDSDDEAAVEEEEE) the composition is skewed to acidic residues. Ser-306 is modified (phosphoserine; by CK2). A Phosphoserine modification is found at Ser-403. N6-succinyllysine is present on Lys-404. Residue Asn-445 is glycosylated (N-linked (GlcNAc...) asparagine). The residue at position 447 (Ser-447) is a Phosphoserine. Lys-479 bears the N6-acetyllysine mark. N-linked (GlcNAc...) asparagine glycosylation is found at Asn-481 and Asn-502. Position 633 is an N6-succinyllysine (Lys-633). The tract at residues 750 to 804 (DPDAKVEEEPEEEPEETTEDTTEDTEQDDEEEMDAGTDDEEQETVKKSTAEKDEL) is disordered. Residues 757–791 (EEPEEEPEETTEDTTEDTEQDDEEEMDAGTDDEEQ) are compositionally biased toward acidic residues. Phosphothreonine; by CK2 is present on residues Thr-766, Thr-770, Thr-774, and Thr-786. Basic and acidic residues predominate over residues 792-804 (ETVKKSTAEKDEL). Residues 801–804 (KDEL) carry the Prevents secretion from ER motif.

This sequence belongs to the heat shock protein 90 family. In terms of assembly, homodimer; disulfide-linked. Component of an EIF2 complex at least composed of CELF1/CUGBP1, CALR, CALR3, EIF2S1, EIF2S2, HSP90B1 and HSPA5. Part of a large chaperone multiprotein complex comprising DNAJB11, HSP90B1, HSPA5, HYOU, PDIA2, PDIA4, PDIA6, PPIB, SDF2L1, UGGT1 and very small amounts of ERP29, but not, or at very low levels, CALR nor CANX. Interacts with AIMP1; regulates its retention in the endoplasmic reticulum. Hyperglycosylated form interacts with OS9; promoting its degradation by the endoplasmic reticulum associated degradation (ERAD). Interacts with CNPY3. This interaction is disrupted in the presence of ATP. Interacts with TLR4 and TLR9, but not with TLR3. Interacts with MZB1 in a calcium-dependent manner. Interacts with METTL23. Interacts with IL1B; the interaction facilitates cargo translocation into the ERGIC. Interacts with EIF2AK3. In terms of processing, phosphorylated by CK2. N-glycosylated cotranslationally at Asn-217 by STT3A-containing OST-A complex: this glycosylation is constitutive. In response to various stress, 5 additional facultative sites (Asn-62, Asn-107, Asn-445, Asn-481 and Asn-502) can be glycosylated post-translationally by STT3B-containing OST-B complex, leading to a hyperglycosylated form that is degraded by the ER-associated degradation (ERAD) pathway. In normal conditions, the OST-A complex together with CCDC134 prevent glycosylation at facultative sites during protein folding, thereby preventing hyperglycosylation. Mechanistically, nascent HSP90B1 is tethered during translation to a specialized CCDC134-containing translocon that forms a microenvironment for its folding, in which STT3A associates with the SRT pseudosubstrate motif, and prevents access to facultative glycosylation sites until folding is completed, rendering its facultative sites inaccessible to the OST-B complex. Detected in heart muscle (at protein level).

It is found in the endoplasmic reticulum lumen. Its subcellular location is the sarcoplasmic reticulum lumen. It localises to the melanosome. The enzyme catalyses ATP + H2O = ADP + phosphate + H(+). In terms of biological role, ATP-dependent chaperone involved in the processing of proteins in the endoplasmic reticulum, regulating their transport. Together with MESD, acts as a modulator of the Wnt pathway by promoting the folding of LRP6, a coreceptor of the canonical Wnt pathway. When associated with CNPY3, required for proper folding of Toll-like receptors. Promotes folding and trafficking of TLR4 to the cell surface. May participate in the unfolding of cytosolic leaderless cargos (lacking the secretion signal sequence) such as the interleukin 1/IL-1 to facilitate their translocation into the ERGIC (endoplasmic reticulum-Golgi intermediate compartment) and secretion; the translocation process is mediated by the cargo receptor TMED10. May also function in endoplasmic reticulum associated degradation (ERAD); it is however unclear whether it participates to ERAD or is a target of ERAD. The sequence is that of Endoplasmin (HSP90B1) from Canis lupus familiaris (Dog).